Here is a 127-residue protein sequence, read N- to C-terminus: Probable glycine cleavage system H protein (127 aa).

The Lipoyl-binding domain occupies 24–106; the sequence is TAEVGITAFA…FGDGWMLTVE (83 aa). K65 is subject to N6-lipoyllysine.

This sequence belongs to the GcvH family. In terms of assembly, the glycine cleavage system is composed of four proteins: P, T, L and H. Requires (R)-lipoate as cofactor.

In terms of biological role, the glycine cleavage system catalyzes the degradation of glycine. The H protein shuttles the methylamine group of glycine from the P protein to the T protein. This Haloarcula marismortui (strain ATCC 43049 / DSM 3752 / JCM 8966 / VKM B-1809) (Halobacterium marismortui) protein is Probable glycine cleavage system H protein.